Here is an 87-residue protein sequence, read N- to C-terminus: Gibberellin-regulated protein 8 (87 aa).

Residues Met-1–Ala-25 form the signal peptide.

Belongs to the GASA family. Six disulfide bonds may be present. Expressed in roots and developing seeds.

Its subcellular location is the secreted. Functionally, gibberellin-regulated protein that may function in hormonal controlled steps of development such as seed germination, flowering and seed maturation. The protein is Gibberellin-regulated protein 8 of Arabidopsis thaliana (Mouse-ear cress).